The chain runs to 205 residues: Calcium-binding allergen Bet v 3 (205 aa).

The disordered stretch occupies residues 1–26 (MPCSTEAMEKAGHGHASTPRKRSLSN). EF-hand domains are found at residues 36-71 (LNTL…LGLE), 72-107 (TDLS…LNDS), 130-165 (QEEA…LGFS), and 168-203 (SEID…VLVR). The Ca(2+) site is built by Asp49, Asn51, Asp53, and Glu60. 10 residues coordinate Ca(2+): Asp143, Asp145, Asp147, Tyr149, Glu154, Asp181, Asn183, Asp185, Arg187, and Glu192.

Functionally, could be involved in calcium metabolism in pollen. Binds 3 calcium ions. This is Calcium-binding allergen Bet v 3 (BETVIII) from Betula pendula (European white birch).